Consider the following 263-residue polypeptide: Indole-3-glycerol phosphate synthase (263 aa).

The protein belongs to the TrpC family.

It carries out the reaction 1-(2-carboxyphenylamino)-1-deoxy-D-ribulose 5-phosphate + H(+) = (1S,2R)-1-C-(indol-3-yl)glycerol 3-phosphate + CO2 + H2O. It participates in amino-acid biosynthesis; L-tryptophan biosynthesis; L-tryptophan from chorismate: step 4/5. This Laribacter hongkongensis (strain HLHK9) protein is Indole-3-glycerol phosphate synthase.